The chain runs to 228 residues: UPF0173 metal-dependent hydrolase lwe1590 (228 aa).

This sequence belongs to the UPF0173 family.

In Listeria welshimeri serovar 6b (strain ATCC 35897 / DSM 20650 / CCUG 15529 / CIP 8149 / NCTC 11857 / SLCC 5334 / V8), this protein is UPF0173 metal-dependent hydrolase lwe1590.